The sequence spans 646 residues: Threonine--tRNA ligase (646 aa).

One can recognise a TGS domain in the interval 1–61 (MIKITFPDGS…NEDASVVLYK (61 aa)). The interval 242-541 (DHRKIGKEMQ…LIEHTAGKFP (300 aa)) is catalytic. Zn(2+) contacts are provided by cysteine 337, histidine 388, and histidine 518.

The protein belongs to the class-II aminoacyl-tRNA synthetase family. Homodimer. It depends on Zn(2+) as a cofactor.

It is found in the cytoplasm. It catalyses the reaction tRNA(Thr) + L-threonine + ATP = L-threonyl-tRNA(Thr) + AMP + diphosphate + H(+). Catalyzes the attachment of threonine to tRNA(Thr) in a two-step reaction: L-threonine is first activated by ATP to form Thr-AMP and then transferred to the acceptor end of tRNA(Thr). Also edits incorrectly charged L-seryl-tRNA(Thr). The sequence is that of Threonine--tRNA ligase from Bacteroides fragilis (strain YCH46).